The primary structure comprises 399 residues: Dual-specificity RNA methyltransferase RlmN (399 aa).

E122 acts as the Proton acceptor in catalysis. In terms of domain architecture, Radical SAM core spans 128–371; it reads ETDRGTLCVS…VRTPRGRDIL (244 aa). The cysteines at positions 135 and 374 are disulfide-linked. [4Fe-4S] cluster contacts are provided by C142, C146, and C149. Residues 200 to 201, S232, 254 to 256, and N331 each bind S-adenosyl-L-methionine; these read GE and SLH. C374 functions as the S-methylcysteine intermediate in the catalytic mechanism.

This sequence belongs to the radical SAM superfamily. RlmN family. It depends on [4Fe-4S] cluster as a cofactor.

The protein localises to the cytoplasm. It carries out the reaction adenosine(2503) in 23S rRNA + 2 reduced [2Fe-2S]-[ferredoxin] + 2 S-adenosyl-L-methionine = 2-methyladenosine(2503) in 23S rRNA + 5'-deoxyadenosine + L-methionine + 2 oxidized [2Fe-2S]-[ferredoxin] + S-adenosyl-L-homocysteine. The enzyme catalyses adenosine(37) in tRNA + 2 reduced [2Fe-2S]-[ferredoxin] + 2 S-adenosyl-L-methionine = 2-methyladenosine(37) in tRNA + 5'-deoxyadenosine + L-methionine + 2 oxidized [2Fe-2S]-[ferredoxin] + S-adenosyl-L-homocysteine. In terms of biological role, specifically methylates position 2 of adenine 2503 in 23S rRNA and position 2 of adenine 37 in tRNAs. m2A2503 modification seems to play a crucial role in the proofreading step occurring at the peptidyl transferase center and thus would serve to optimize ribosomal fidelity. This chain is Dual-specificity RNA methyltransferase RlmN, found in Rhodopseudomonas palustris (strain ATCC BAA-98 / CGA009).